Consider the following 118-residue polypeptide: uncharacterized protein (118 aa).

Residues 95–115 traverse the membrane as a helical segment; the sequence is IIINLVIILAMYAPEIIGKLL.

This sequence belongs to the M.jannaschii MJ0023/MJ0349/MJ1072/MJ1074/MJ1107/MJECL16 family.

The protein localises to the membrane. This is an uncharacterized protein from Methanocaldococcus jannaschii (strain ATCC 43067 / DSM 2661 / JAL-1 / JCM 10045 / NBRC 100440) (Methanococcus jannaschii).